The primary structure comprises 599 residues: Sulfite reductase [NADPH] flavoprotein alpha-component (599 aa).

The region spanning Ile64–Val202 is the Flavodoxin-like domain. Residues Ser70–Ala75, Ser117–Gly120, and Leu153–Cys162 contribute to the FMN site. The FAD-binding FR-type domain maps to Asp234 to Pro448. FAD contacts are provided by residues Thr322, Ala356, Arg386–Ser389, Thr404–Gly406, Tyr410, and Gly419–Ser422. Residues Ser519–Arg520, Lys525–Gln529, and Asp561 each bind NADP(+). Tyr599 serves as a coordination point for FAD.

This sequence belongs to the NADPH-dependent sulphite reductase flavoprotein subunit CysJ family. It in the N-terminal section; belongs to the flavodoxin family. In the C-terminal section; belongs to the flavoprotein pyridine nucleotide cytochrome reductase family. As to quaternary structure, alpha(8)-beta(8). The alpha component is a flavoprotein, the beta component is a hemoprotein. The cofactor is FAD. FMN serves as cofactor.

The enzyme catalyses hydrogen sulfide + 3 NADP(+) + 3 H2O = sulfite + 3 NADPH + 4 H(+). Its pathway is sulfur metabolism; hydrogen sulfide biosynthesis; hydrogen sulfide from sulfite (NADPH route): step 1/1. Its function is as follows. Component of the sulfite reductase complex that catalyzes the 6-electron reduction of sulfite to sulfide. This is one of several activities required for the biosynthesis of L-cysteine from sulfate. The flavoprotein component catalyzes the electron flow from NADPH -&gt; FAD -&gt; FMN to the hemoprotein component. This chain is Sulfite reductase [NADPH] flavoprotein alpha-component, found in Shigella dysenteriae serotype 1 (strain Sd197).